Consider the following 404-residue polypeptide: Formate-dependent phosphoribosylglycinamide formyltransferase (404 aa).

N(1)-(5-phospho-beta-D-ribosyl)glycinamide-binding positions include 25–26 (EL) and E85. ATP is bound by residues R118, K159, 164–169 (SSGKGQ), 199–202 (EGFI), and E207. In terms of domain architecture, ATP-grasp spans 123–318 (RLAAEELGLP…EFELHARAIL (196 aa)). Mg(2+) is bound by residues E277 and E289. Residues D296, K365, and 372 to 373 (RR) each bind N(1)-(5-phospho-beta-D-ribosyl)glycinamide. The tract at residues 384–404 (TDEARSRAKQAAAAVRPVSAK) is disordered. Low complexity predominate over residues 392–404 (KQAAAAVRPVSAK).

This sequence belongs to the PurK/PurT family. In terms of assembly, homodimer.

The catalysed reaction is N(1)-(5-phospho-beta-D-ribosyl)glycinamide + formate + ATP = N(2)-formyl-N(1)-(5-phospho-beta-D-ribosyl)glycinamide + ADP + phosphate + H(+). It participates in purine metabolism; IMP biosynthesis via de novo pathway; N(2)-formyl-N(1)-(5-phospho-D-ribosyl)glycinamide from N(1)-(5-phospho-D-ribosyl)glycinamide (formate route): step 1/1. Involved in the de novo purine biosynthesis. Catalyzes the transfer of formate to 5-phospho-ribosyl-glycinamide (GAR), producing 5-phospho-ribosyl-N-formylglycinamide (FGAR). Formate is provided by PurU via hydrolysis of 10-formyl-tetrahydrofolate. This Paraburkholderia xenovorans (strain LB400) protein is Formate-dependent phosphoribosylglycinamide formyltransferase.